We begin with the raw amino-acid sequence, 184 residues long: Probable maltose O-acetyltransferase (184 aa).

Asn84 is an acetyl-CoA binding site. The active-site Proton donor/acceptor is His114. Residues Gly141, Ser159, 164-165, Arg179, and Lys182 contribute to the acetyl-CoA site; that span reads TK.

The protein belongs to the transferase hexapeptide repeat family. In terms of assembly, homodimer.

It catalyses the reaction D-maltose + acetyl-CoA = 1-O-acetylmaltose + CoA. Its function is as follows. Catalyzes the CoA-dependent transfer of an acetyl group to maltose and other sugars. Acetylates glucose exclusively at the C6 position and maltose at the C6 position of the non-reducing end glucosyl moiety. Is able to acetylate maltooligosaccharides. The sequence is that of Probable maltose O-acetyltransferase (maa) from Bacillus subtilis (strain 168).